The sequence spans 362 residues: Peptide chain release factor 1 (362 aa).

Position 237 is an N5-methylglutamine (glutamine 237). Basic and acidic residues predominate over residues 282–296 (QQEEDKRRAEADSTR). Residues 282 to 304 (QQEEDKRRAEADSTRRSILSTGD) are disordered.

This sequence belongs to the prokaryotic/mitochondrial release factor family. Methylated by PrmC. Methylation increases the termination efficiency of RF1.

It localises to the cytoplasm. In terms of biological role, peptide chain release factor 1 directs the termination of translation in response to the peptide chain termination codons UAG and UAA. This Tolumonas auensis (strain DSM 9187 / NBRC 110442 / TA 4) protein is Peptide chain release factor 1.